The chain runs to 229 residues: Potassium/proton antiporter CemA (229 aa).

The next 4 membrane-spanning stretches (helical) occupy residues 7 to 27, 114 to 134, 145 to 165, and 189 to 209; these read FTSL…SLSF, IICF…LVIL, LSDT…IGFH, and ILSS…KFWV.

The protein belongs to the CemA family.

The protein resides in the plastid. It localises to the chloroplast inner membrane. It catalyses the reaction K(+)(in) + H(+)(out) = K(+)(out) + H(+)(in). Its function is as follows. Contributes to K(+)/H(+) antiport activity by supporting proton efflux to control proton extrusion and homeostasis in chloroplasts in a light-dependent manner to modulate photosynthesis. Prevents excessive induction of non-photochemical quenching (NPQ) under continuous-light conditions. Indirectly promotes efficient inorganic carbon uptake into chloroplasts. This chain is Potassium/proton antiporter CemA, found in Daucus carota (Wild carrot).